A 519-amino-acid chain; its full sequence is Zinc finger protein 692 (519 aa).

The tract at residues 123–314 is disordered; sequence GPSLSPTPSE…PAWDEDTAQI (192 aa). Positions 145-155 are enriched in polar residues; that stretch reads RSWCSEATSGQ. S162 is modified (phosphoserine). Positions 164–173 are enriched in basic and acidic residues; sequence HDERTQEARL. Pro residues predominate over residues 177-187; it reads VGPPPETFPPP. A compositionally biased stretch (acidic residues) spans 188-206; that stretch reads GEEEGEEEEDNDEDEEEML. A Phosphoserine modification is found at S231. Positions 247-266 are enriched in low complexity; it reads AALSSPLAVPALSASSLSSR. Over residues 277-303 the composition is skewed to polar residues; the sequence is PQLSRTPQAAQQTEALASTGSQAQSAP. 5 C2H2-type zinc fingers span residues 328–353, 359–383, 389–411, 417–439, and 448–471; these read MPCDFPGCGRIFSNRQYLNHHKKYQH, FSCPEPACGKSFNFKKHLKEHMKLH, YICEFCARSFRTSSNLVIHRRIH, LQCEICGFTCRQKASLNWHQRKH, and FPCEFCGKRFEKPDSVAAHRSKSH. Residues 469–519 are disordered; that stretch reads KSHPALLLAPQESPSGPLEPCPSISAPGPLGSSEGSRPSASPQAPTLLPQQ. S470 carries the post-translational modification Phosphoserine; by AMPK. Residues 501-519 are compositionally biased toward polar residues; the sequence is SEGSRPSASPQAPTLLPQQ.

Belongs to the krueppel C2H2-type zinc-finger protein family. Phosphorylation at Ser-470 results in loss of DNA-binding activity. In terms of tissue distribution, ubiquitous. Highly expressed in brain, thymus and spleen.

It is found in the nucleus. Its function is as follows. May act as an transcriptional repressor for PCK1 gene expression, in turn may participate in the hepatic gluconeogenesis regulation through the activated AMPK signaling pathway. The sequence is that of Zinc finger protein 692 (ZNF692) from Homo sapiens (Human).